The sequence spans 91 residues: MTKGTQSFGMRHNKSHTICRRCGKRSFHIQKSTCACCGYPAAKTRSYNWGAKAKRRRTTGTGRMSYLKKVHRSFKNGFRSGKPAAAVAASA.

Residues cysteine 19, cysteine 22, cysteine 34, and cysteine 37 each contribute to the Zn(2+) site. The segment at 19-37 adopts a C4-type zinc-finger fold; sequence CRRCGKRSFHIQKSTCACC.

It belongs to the eukaryotic ribosomal protein eL37 family. Component of the large ribosomal subunit (LSU). Mature yeast ribosomes consist of a small (40S) and a large (60S) subunit. The 40S small subunit contains 1 molecule of ribosomal RNA (18S rRNA) and at least 33 different proteins. The large 60S subunit contains 3 rRNA molecules (25S, 5.8S and 5S rRNA) and at least 46 different proteins. Zn(2+) serves as cofactor.

Its subcellular location is the cytoplasm. Functionally, component of the ribosome, a large ribonucleoprotein complex responsible for the synthesis of proteins in the cell. The small ribosomal subunit (SSU) binds messenger RNAs (mRNAs) and translates the encoded message by selecting cognate aminoacyl-transfer RNA (tRNA) molecules. The large subunit (LSU) contains the ribosomal catalytic site termed the peptidyl transferase center (PTC), which catalyzes the formation of peptide bonds, thereby polymerizing the amino acids delivered by tRNAs into a polypeptide chain. The nascent polypeptides leave the ribosome through a tunnel in the LSU and interact with protein factors that function in enzymatic processing, targeting, and the membrane insertion of nascent chains at the exit of the ribosomal tunnel. In Schizosaccharomyces pombe (strain 972 / ATCC 24843) (Fission yeast), this protein is Large ribosomal subunit protein eL37B (rpl3702).